A 283-amino-acid polypeptide reads, in one-letter code: Acetylglutamate kinase (283 aa).

Substrate is bound by residues glycine 63 to glycine 64, arginine 85, and asparagine 178.

This sequence belongs to the acetylglutamate kinase family. ArgB subfamily.

It is found in the cytoplasm. It carries out the reaction N-acetyl-L-glutamate + ATP = N-acetyl-L-glutamyl 5-phosphate + ADP. The protein operates within amino-acid biosynthesis; L-arginine biosynthesis; N(2)-acetyl-L-ornithine from L-glutamate: step 2/4. Functionally, catalyzes the ATP-dependent phosphorylation of N-acetyl-L-glutamate. The protein is Acetylglutamate kinase of Prochlorococcus marinus (strain MIT 9515).